Reading from the N-terminus, the 60-residue chain is Toxin S4C8 (60 aa).

4 cysteine pairs are disulfide-bonded: Cys-3-Cys-22, Cys-17-Cys-39, Cys-41-Cys-52, and Cys-53-Cys-58. Residues 41-48 (CPTAMWPY) form an important for binding to L-type calcium channels region.

Belongs to the three-finger toxin family. Short-chain subfamily. L-type calcium blocker sub-subfamily. As to expression, expressed by the venom gland.

It is found in the secreted. This specific blocker of the L-type calcium channel (Cav1/CACNA1) is a smooth muscle relaxant and an inhibitor of cardiac contractions. In Dendroaspis jamesoni kaimosae (Eastern Jameson's mamba), this protein is Toxin S4C8.